We begin with the raw amino-acid sequence, 267 residues long: Orotidine 5'-phosphate decarboxylase (267 aa).

Substrate contacts are provided by residues D37, 59–61, 91–100, Y217, and R235; these read KTH and DRKFADIGNT. Residue K93 is the Proton donor of the active site.

Belongs to the OMP decarboxylase family.

The enzyme catalyses orotidine 5'-phosphate + H(+) = UMP + CO2. Its pathway is pyrimidine metabolism; UMP biosynthesis via de novo pathway; UMP from orotate: step 2/2. In Kluyveromyces marxianus (Yeast), this protein is Orotidine 5'-phosphate decarboxylase (URA3).